Here is a 123-residue protein sequence, read N- to C-terminus: uncharacterized protein (123 aa).

This is an uncharacterized protein from Bacillus subtilis (strain 168).